A 150-amino-acid chain; its full sequence is UPF0098 protein TC_0109 (150 aa).

This sequence belongs to the UPF0098 family.

This chain is UPF0098 protein TC_0109, found in Chlamydia muridarum (strain MoPn / Nigg).